The chain runs to 194 residues: ATP-dependent Clp protease proteolytic subunit (194 aa).

Residue Ser98 is the Nucleophile of the active site. His123 is a catalytic residue.

The protein belongs to the peptidase S14 family. Component of the chloroplastic Clp protease core complex.

It localises to the plastid. The protein resides in the cyanelle. The enzyme catalyses Hydrolysis of proteins to small peptides in the presence of ATP and magnesium. alpha-casein is the usual test substrate. In the absence of ATP, only oligopeptides shorter than five residues are hydrolyzed (such as succinyl-Leu-Tyr-|-NHMec, and Leu-Tyr-Leu-|-Tyr-Trp, in which cleavage of the -Tyr-|-Leu- and -Tyr-|-Trp bonds also occurs).. Functionally, cleaves peptides in various proteins in a process that requires ATP hydrolysis. Has a chymotrypsin-like activity. Plays a major role in the degradation of misfolded proteins. The sequence is that of ATP-dependent Clp protease proteolytic subunit (clpP-A) from Cyanophora paradoxa.